The primary structure comprises 736 residues: Subtilisin-like protease SBT4.12 (736 aa).

Positions 1–24 (MANLAASTCLYSWLLVLLLSSVSA) are cleaved as a signal peptide. The propeptide at 25–110 (IIDEDTQVYI…VFPNKILQLH (86 aa)) is activation peptide. Residues 32 to 110 (VYIVYMGSLS…VFPNKILQLH (79 aa)) enclose the Inhibitor I9 domain. The 467-residue stretch at 114-580 (SWDFMGVKEG…AGHVDPMAAL (467 aa)) folds into the Peptidase S8 domain. The active-site Charge relay system is Asp142. Residue Asn173 is glycosylated (N-linked (GlcNAc...) asparagine). Catalysis depends on His197, which acts as the Charge relay system. N-linked (GlcNAc...) asparagine glycosylation is found at Asn220, Asn381, and Asn459. Residues 353–437 (KYPLVYGKSA…GLKAKDFKSL (85 aa)) enclose the PA domain. Ser519 functions as the Charge relay system in the catalytic mechanism. Residues Asn601, Asn649, and Asn659 are each glycosylated (N-linked (GlcNAc...) asparagine).

It belongs to the peptidase S8 family. Post-translationally, the C-terminal propeptide is autocleaved. Specifically expressed in root stele of the root hair zone.

Its subcellular location is the secreted. In Arabidopsis thaliana (Mouse-ear cress), this protein is Subtilisin-like protease SBT4.12.